The primary structure comprises 61 residues: Small ribosomal subunit protein uS14 (61 aa).

Positions 24, 27, 40, and 43 each coordinate Zn(2+).

It belongs to the universal ribosomal protein uS14 family. Zinc-binding uS14 subfamily. As to quaternary structure, part of the 30S ribosomal subunit. Contacts proteins S3 and S10. Requires Zn(2+) as cofactor.

In terms of biological role, binds 16S rRNA, required for the assembly of 30S particles and may also be responsible for determining the conformation of the 16S rRNA at the A site. The sequence is that of Small ribosomal subunit protein uS14 from Mycobacterium avium (strain 104).